Consider the following 504-residue polypeptide: Endochitinase (504 aa).

The first 22 residues, 1 to 22, serve as a signal peptide directing secretion; it reads MNRTTLILFFIILSNTITVIHG. Positions 23 to 392 constitute a GH18 domain; sequence YVRGCYYTNW…NAISSELEGE (370 aa). Cysteine 27 and cysteine 52 are disulfide-bonded. Residues 78-79 and 105-108 each bind chitin; these read TE and GGYN. The active-site Proton donor is the glutamate 148. Residues tyrosine 149, 212–215, and tryptophan 362 contribute to the chitin site; that span reads MSYD. The segment at 389–450 is disordered; that stretch reads LEGESENPEI…YDTDETEGQE (62 aa). The span at 396–408 shows a compositional bias: low complexity; that stretch reads PEITTEEPSITET. 2 tandem repeats follow at residues 407 to 420 and 421 to 434. The interval 407–448 is 3 X 14 AA approximate tandem repeats of E-T-E-A-Y-[ED]-T-D-E-T-E-E-T-S; that stretch reads ETEAYETDETEETSETEAYDTDETEETSETEATTYDTDETEG. The span at 409–435 shows a compositional bias: acidic residues; sequence EAYETDETEETSETEAYDTDETEETSE. Residues 435–448 form a 3; approximate repeat; it reads ETEATTYDTDETEG. Positions 448–504 constitute a Chitin-binding type-2 domain; the sequence is GQECPERDGLFPHPTDCHLFIQCANNIAYVMQCPATTFFNDAIKVCDHMTNAPDTCI. Cysteine 480 and cysteine 493 are oxidised to a cystine.

The protein belongs to the glycosyl hydrolase 18 family. Chitinase class II subfamily. Post-translationally, O-glycosylated.

It catalyses the reaction Random endo-hydrolysis of N-acetyl-beta-D-glucosaminide (1-&gt;4)-beta-linkages in chitin and chitodextrins.. Microfilarial chitinase, which may function to degrade chitin-containing structures in the micro-filaria or in its mosquito vector during parasite development and transmission. The protein is Endochitinase of Brugia malayi (Filarial nematode worm).